Reading from the N-terminus, the 141-residue chain is Hemoglobin subunit alpha-D (141 aa).

The region spanning 1-141 is the Globin domain; that stretch reads MLTADDKKLL…VAAVLAEKYR (141 aa). Residues His58 and His87 each coordinate heme b.

This sequence belongs to the globin family. In terms of assembly, heterotetramer of two alpha-D chains and two beta chains. In terms of tissue distribution, red blood cells.

Functionally, involved in oxygen transport from the lung to the various peripheral tissues. The sequence is that of Hemoglobin subunit alpha-D (HBAD) from Anser anser anser (Western greylag goose).